Consider the following 186-residue polypeptide: Peptidyl-tRNA hydrolase (186 aa).

Residue Tyr-14 coordinates tRNA. The active-site Proton acceptor is the His-19. 3 residues coordinate tRNA: Tyr-64, Asn-66, and Asn-112.

The protein belongs to the PTH family. As to quaternary structure, monomer.

The protein resides in the cytoplasm. It catalyses the reaction an N-acyl-L-alpha-aminoacyl-tRNA + H2O = an N-acyl-L-amino acid + a tRNA + H(+). In terms of biological role, hydrolyzes ribosome-free peptidyl-tRNAs (with 1 or more amino acids incorporated), which drop off the ribosome during protein synthesis, or as a result of ribosome stalling. Its function is as follows. Catalyzes the release of premature peptidyl moieties from peptidyl-tRNA molecules trapped in stalled 50S ribosomal subunits, and thus maintains levels of free tRNAs and 50S ribosomes. The protein is Peptidyl-tRNA hydrolase of Bacillus cereus (strain Q1).